The following is a 122-amino-acid chain: Large ribosomal subunit protein uL18 (122 aa).

The protein belongs to the universal ribosomal protein uL18 family. In terms of assembly, part of the 50S ribosomal subunit; part of the 5S rRNA/L5/L18/L25 subcomplex. Contacts the 5S and 23S rRNAs.

This is one of the proteins that bind and probably mediate the attachment of the 5S RNA into the large ribosomal subunit, where it forms part of the central protuberance. The polypeptide is Large ribosomal subunit protein uL18 (Leptospira biflexa serovar Patoc (strain Patoc 1 / Ames)).